A 236-amino-acid chain; its full sequence is Uridylate kinase (236 aa).

K10–G13 provides a ligand contact to ATP. Residue G52 participates in UMP binding. ATP is bound by residues G53 and R57. UMP-binding positions include D72 and T133–T140. ATP contacts are provided by T160, Y166, and D169.

It belongs to the UMP kinase family. Homohexamer.

It is found in the cytoplasm. It carries out the reaction UMP + ATP = UDP + ADP. The protein operates within pyrimidine metabolism; CTP biosynthesis via de novo pathway; UDP from UMP (UMPK route): step 1/1. Its activity is regulated as follows. Inhibited by UTP. In terms of biological role, catalyzes the reversible phosphorylation of UMP to UDP. This Parabacteroides distasonis (strain ATCC 8503 / DSM 20701 / CIP 104284 / JCM 5825 / NCTC 11152) protein is Uridylate kinase.